A 152-amino-acid chain; its full sequence is Small ribosomal subunit protein bS6 (152 aa).

The interval 96–152 (HEEGPSAMLQKRDRDDRGERGDRGDRGDRGDRGFGGREDRPRRPRPTEESHGGEEEV) is disordered.

The protein belongs to the bacterial ribosomal protein bS6 family.

Binds together with bS18 to 16S ribosomal RNA. The sequence is that of Small ribosomal subunit protein bS6 from Xanthobacter autotrophicus (strain ATCC BAA-1158 / Py2).